Reading from the N-terminus, the 415-residue chain is MATH domain and coiled-coil domain-containing protein At2g42465 (415 aa).

The 125-residue stretch at 6-130 folds into the MATH domain; the sequence is RKALTLTVTN…NDRFNIEIYI (125 aa). Positions 244–341 form a coiled coil; sequence FKLEWLKAKL…LLKDTYSDLK (98 aa).

In Arabidopsis thaliana (Mouse-ear cress), this protein is MATH domain and coiled-coil domain-containing protein At2g42465.